Here is a 72-residue protein sequence, read N- to C-terminus: Translation initiation factor IF-1 (72 aa).

In terms of domain architecture, S1-like spans 1–72 (MAKEDNIEMQ…SKGRIVFRSR (72 aa)).

The protein belongs to the IF-1 family. As to quaternary structure, component of the 30S ribosomal translation pre-initiation complex which assembles on the 30S ribosome in the order IF-2 and IF-3, IF-1 and N-formylmethionyl-tRNA(fMet); mRNA recruitment can occur at any time during PIC assembly.

It localises to the cytoplasm. Its function is as follows. One of the essential components for the initiation of protein synthesis. Stabilizes the binding of IF-2 and IF-3 on the 30S subunit to which N-formylmethionyl-tRNA(fMet) subsequently binds. Helps modulate mRNA selection, yielding the 30S pre-initiation complex (PIC). Upon addition of the 50S ribosomal subunit IF-1, IF-2 and IF-3 are released leaving the mature 70S translation initiation complex. The polypeptide is Translation initiation factor IF-1 (Salmonella paratyphi A (strain ATCC 9150 / SARB42)).